A 1411-amino-acid chain; its full sequence is Protein ECM5 (1411 aa).

The JmjN domain occupies 118–159; the sequence is IPTFILAKKELPDPIKFYELVEDLGSVYGCVKLKIIPDADKF. One can recognise an ARID domain in the interval 185–279; the sequence is RTKIVDFYAK…ILLDFDIYEE (95 aa). Positions 285–312 are disordered; that stretch reads RNNEKNEDMVESEIFRHSNSRSRDEEEP. In terms of domain architecture, JmjC spans 476-695; it reads KNILDQWNLD…FSSEAAKWTS (220 aa). The PHD-type zinc-finger motif lies at 1238–1290; sequence TKYCFCRRVEEGTAMVECEICKEWYHVDCISNGELVPPDDPNVLFVCSICTPP.

The protein localises to the nucleus. Its function is as follows. May be involved in cell wall organization and biogenesis. The chain is Protein ECM5 (ECM5) from Saccharomyces cerevisiae (strain ATCC 204508 / S288c) (Baker's yeast).